Here is a 229-residue protein sequence, read N- to C-terminus: Cytidylate kinase (229 aa).

15-23 contributes to the ATP binding site; it reads GPAASGKST.

Belongs to the cytidylate kinase family. Type 1 subfamily.

Its subcellular location is the cytoplasm. It catalyses the reaction CMP + ATP = CDP + ADP. It carries out the reaction dCMP + ATP = dCDP + ADP. This Herpetosiphon aurantiacus (strain ATCC 23779 / DSM 785 / 114-95) protein is Cytidylate kinase.